Reading from the N-terminus, the 303-residue chain is Crk-like protein (303 aa).

An SH2 domain is found at 14-102 (WYMGPVSRQE…LDTTTLIEPA (89 aa)). In terms of domain architecture, SH3 1 spans 123 to 183 (ENLEYVRTLY…PVPYVEKLVR (61 aa)). Tyrosine 127 is subject to Phosphotyrosine. Residues 184–204 (SSPHGKHGNRNSNSYGIPEPA) form a disordered region. Tyrosine 207 carries the phosphotyrosine modification. The SH3 2 domain maps to 235 to 296 (NGPVFAKAIQ…PFTHVKIFDP (62 aa)).

It belongs to the CRK family. As to quaternary structure, interacts with INPP5D/SHIP1. Interacts with DOCK2 and EPOR. Interacts with phosphorylated CBLB and IRS4. Interacts with BCAR1/CAS and NEDD9/HEF1.

Functionally, may mediate the transduction of intracellular signals. The chain is Crk-like protein from Rattus norvegicus (Rat).